The sequence spans 160 residues: Large ribosomal subunit protein uL22c (160 aa).

The protein belongs to the universal ribosomal protein uL22 family. In terms of assembly, part of the 50S ribosomal subunit.

The protein localises to the plastid. It localises to the chloroplast. Functionally, this protein binds specifically to 23S rRNA. Its function is as follows. The globular domain of the protein is located near the polypeptide exit tunnel on the outside of the subunit, while an extended beta-hairpin is found that lines the wall of the exit tunnel in the center of the 70S ribosome. In Olimarabidopsis pumila (Dwarf rocket), this protein is Large ribosomal subunit protein uL22c (rpl22).